The sequence spans 527 residues: Cytochrome P450 monooxygenase olcJ (527 aa).

The chain crosses the membrane as a helical span at residues 21 to 43; it reads GLLTRYNVFMAISITVTALYLIH. A heme-binding site is contributed by cysteine 464.

Belongs to the cytochrome P450 family. Heme serves as cofactor.

Its subcellular location is the membrane. It participates in secondary metabolite biosynthesis; terpenoid biosynthesis. In terms of biological role, cytochrome P450 monooxygenase; part of the gene cluster that mediates the biosynthesis of 15-deoxyoxalicine B. The first step of the pathway is the synthesis of nicotinyl-CoA from nicotinic acid by the nicotinic acid-CoA ligase olcI. Nicotinyl-CoA is then a substrate of polyketide synthase olcA to produce 4-hydroxy-6-(3-pyridinyl)-2H-pyran-2-one (HPPO) which is further prenylated by the polyprenyl transferase olcH to yield geranylgeranyl-HPPO. Geranylgeranyl pyrophosphate is provided by the cluster-specific geranylgeranyl pyrophosphate synthase olcC. The FAD-dependent monooxygenase olcE catalyzes the epoxidation of geranylgeranyl-HPPO and the terpene cyclase olcD catalyzes the cyclization of the terpenoid component, resulting in the formation of the tricyclic terpene moiety seen in predecaturin E. The cytochrome P450 monooxygenase then catalyzes the allylic oxidation of predecaturin E, which is followed by spirocylization with concomitant loss of one molecule of water to form decaturin E. Decaturin E is the substrate of the cytochrome P450 monooxygenase olcJ which hydroxylates it at the C-29 position to form decaturin F. The short-chain dehydrogenase/reductase olcF may catalyze the oxidation of decaturin F to generate the 29-hydroxyl-27-one intermediate, and subsequent hemiacetal formation probably leads to the formation of decaturin C. The dioxygenase olcK may be a peroxisomal enzyme that catalyzes the hydroxylation of decaturin C into decaturin A once decaturin C is shuttled into the peroxisome by the MFS transporter olcL. Finally the cytochrome P450 monooxygenase olcB catalyzes the oxidative rearrangement to yield 15-deoxyoxalicine B. In the absence of olcJ, decaturin E may be shunted to a pathway in which it is oxidized to a ketone, possibly by olcF, to form decaturin D, which undergoes further allylic oxidation to yield decaturin G. Moreover, in the absence of oclK or oclL, oclB can convert decaturin C into 15-deoxyoxalicine A. The polypeptide is Cytochrome P450 monooxygenase olcJ (Penicillium canescens).